The primary structure comprises 654 residues: MTQRSLKINIIEGKDLKGLDSGGVSDCYVKFKCGPISAKTEVIKKSTSPIWNYMINIGNVEENTLLQFECFDWERIGNNRTMGKTQAFVSDLSSGAKRNLMDQWLRLDTKGFIRISYEFTPPYPLETESTNSPNLSVVGNGSSSSSSLMYNPTPVYFKPIFLPTIPSETINNNKSTTCHFLIPGSVYQTRPFVCGEFVNCSLVLNVFEARIVVRSLNLSFSGSITYKGKKQRKLVNDYRDLLLGFTGGVPVPNNNGNNNLTSNKVVLERGKHVFPFQFFIDKTCKSTVNLTDYKVNYYLSFHADIVNQPDISASQEIKVVNLEDTVYKQTISPINAQTSKSPLTGGNISISCKSVKNSFYPGEEIELEVEVNNSSKKKIKNVDIQLNKVEYDGTDVTGTSYQLLTMTKKFYPKIKQNTACKQMVVIELPSTTQCVGLIHSIAETKMIRVEYHLLVNLDIPSCVDLRLKLPITIVQPDPKFETLPNPLTEIGNLPRYVKDWSIKNFHSWVLFKKQCPDVMALNPEFYQYNLSGSDLMQLPTETLYSIFKGAGPRTQELVNDLQSQIFEIKLVRNFLKELQLSNLIDYFEKQTITWDILLQLNYNEIFSITDITIGDAKRIFLKIQQIQSERQKQQEQQEQQVVSNLEAVSLQKSE.

The C2 domain maps to 1–105; the sequence is MTQRSLKINI…AKRNLMDQWL (105 aa). The stretch at 616–647 forms a coiled coil; it reads AKRIFLKIQQIQSERQKQQEQQEQQVVSNLEA.

Belongs to the arrestin family.

The chain is Arrestin domain-containing protein C (adcC) from Dictyostelium discoideum (Social amoeba).